The sequence spans 259 residues: Methanethiol S-methyltransferase 2 (259 aa).

5 helical membrane-spanning segments follow: residues 5-25 (LAILLYAIVSYAAFTVSFLYA), 46-66 (LGEAILVNLLLMSLFAIQHSV), 88-108 (TYVLLSSLILLLLFWQWRPIP), 115-135 (SGIAAWLLIGVHWLGWLIAFA), and 182-202 (FLLAFWATPAMTAGHLLFALA).

The protein belongs to the nurim family.

It is found in the membrane. The enzyme catalyses methanethiol + S-adenosyl-L-methionine = dimethyl sulfide + S-adenosyl-L-homocysteine + H(+). Catalyzes the methylation of methanethiol (MeSH) to yield dimethylsulphide (DMS). The chain is Methanethiol S-methyltransferase 2 from Bradyrhizobium diazoefficiens (strain JCM 10833 / BCRC 13528 / IAM 13628 / NBRC 14792 / USDA 110).